The sequence spans 898 residues: Serine/threonine-protein kinase TAO3 (898 aa).

Residues 24–277 (FIGLHEIGHG…SAELLRHDFV (254 aa)) enclose the Protein kinase domain. Residues 30-38 (IGHGSFGAV) and lysine 53 each bind ATP. Residue aspartate 147 is the Proton acceptor of the active site. Disordered stretches follow at residues 316–362 (TRNG…SQSS) and 405–425 (DEAG…VQSQ). Residue serine 324 is modified to Phosphoserine; by ATM. 4 positions are modified to phosphoserine: serine 331, serine 343, serine 346, and serine 349. Over residues 334-351 (GTSLNREMDSLGSNHSIP) the composition is skewed to polar residues. The span at 352–362 (SMSVSTGSQSS) shows a compositional bias: low complexity. Residue threonine 357 is modified to Phosphothreonine. Serine 359 carries the post-translational modification Phosphoserine. Basic and acidic residues predominate over residues 405–416 (DEAGHGDPRPEP). A Phosphoserine modification is found at serine 442. Coiled coils occupy residues 452–502 (EQEN…THAN), 548–649 (FLES…HAML), and 754–879 (LKTL…DMES). The tract at residues 565–596 (EEMNEDHSTPKKEKQERISKHKENLQHTQAEE) is disordered. At lysine 830 the chain carries N6-acetyllysine.

It belongs to the protein kinase superfamily. STE Ser/Thr protein kinase family. STE20 subfamily. Self-associates. Interacts with ERN1 and TRAF2. Interaction with TRAF2 is facilitated under ER stress conditions, such as treatment with tunicamycin, and may promote TRAF2 phosphorylation. Interacts (via N-terminus) with STK25; the interaction promotes STK25 abundance at the level of protein expression and/or stability. In terms of processing, autophosphorylated. Phosphorylation at Ser-324 by ATM following DNA damage is required for activation of the p38/MAPK14 stress-activated MAPK cascade. Phosphorylated at Ser-324 and on Tyr residues during T cell activation. Phosphorylated by LRRK2.

It is found in the cytoplasm. The protein localises to the cell membrane. The protein resides in the membrane raft. Its subcellular location is the lipid droplet. It catalyses the reaction L-seryl-[protein] + ATP = O-phospho-L-seryl-[protein] + ADP + H(+). The catalysed reaction is L-threonyl-[protein] + ATP = O-phospho-L-threonyl-[protein] + ADP + H(+). Its function is as follows. Serine/threonine-protein kinase that acts as a regulator of the p38/MAPK14 stress-activated MAPK cascade and of the MAPK8/JNK cascade. In response to DNA damage, involved in the G2/M transition DNA damage checkpoint by activating the p38/MAPK14 stress-activated MAPK cascade, probably by mediating phosphorylation of upstream MAP2K3 and MAP2K6 kinases. Inhibits basal activity of the MAPK8/JNK cascade and diminishes its activation in response to epidermal growth factor (EGF). Positively regulates canonical T cell receptor (TCR) signaling by preventing early PTPN6/SHP1-mediated inactivation of LCK, ensuring sustained TCR signaling that is required for optimal activation and differentiation of T cells. Phosphorylates PTPN6/SHP1 on 'Thr-394', leading to its polyubiquitination and subsequent proteasomal degradation. Required for cell surface expression of metalloprotease ADAM10 on type 1 transitional B cells which is necessary for their NOTCH-mediated development into marginal zone B cells. Also required for the NOTCH-mediated terminal differentiation of splenic conventional type 2 dendritic cells. Positively regulates osteoblast differentiation by acting as an upstream activator of the JNK pathway. Promotes JNK signaling in hepatocytes and positively regulates hepatocyte lipid storage by inhibiting beta-oxidation and triacylglycerol secretion while enhancing lipid synthesis. Restricts age-associated inflammation by negatively regulating differentiation of macrophages and their production of pro-inflammatory cytokines. Plays a role in negatively regulating the abundance of regulatory T cells in white adipose tissue. The chain is Serine/threonine-protein kinase TAO3 (TAOK3) from Pongo abelii (Sumatran orangutan).